The sequence spans 383 residues: Methenyltetrahydrofolate synthase domain-containing protein (383 aa).

The tract at residues 249 to 301 (AGKDVTLQGEHQHLPEPGCQQTVPLSVGRRPPDTPGPETNSMEAAPGSPPGEG) is disordered. The 74-residue stretch at 306-379 (ADVYVGNLPG…DTLRVALARQ (74 aa)) folds into the RRM domain.

The protein is Methenyltetrahydrofolate synthase domain-containing protein (MTHFSD) of Homo sapiens (Human).